The chain runs to 58 residues: Ribosome modulation factor (58 aa).

Belongs to the ribosome modulation factor family.

It localises to the cytoplasm. In terms of biological role, during stationary phase, converts 70S ribosomes to an inactive dimeric form (100S ribosomes). This is Ribosome modulation factor from Shewanella amazonensis (strain ATCC BAA-1098 / SB2B).